A 352-amino-acid chain; its full sequence is Putative pectinesterase 11 (352 aa).

Residues 13–35 (ANYHHIIIINIFILSSITSSSMA) traverse the membrane as a helical segment. N-linked (GlcNAc...) asparagine glycosylation occurs at asparagine 76. Aspartate 175 acts as the Proton donor in catalysis. Residue aspartate 196 is the Nucleophile of the active site. Asparagine 218 carries an N-linked (GlcNAc...) asparagine glycan. The substrate site is built by arginine 252 and tryptophan 254. The interval 332–352 (LRPAPSHFKNAPKQTQNKEIN) is disordered. The segment covering 343–352 (PKQTQNKEIN) has biased composition (polar residues).

This sequence belongs to the pectinesterase family.

It localises to the membrane. The enzyme catalyses [(1-&gt;4)-alpha-D-galacturonosyl methyl ester](n) + n H2O = [(1-&gt;4)-alpha-D-galacturonosyl](n) + n methanol + n H(+). Its pathway is glycan metabolism; pectin degradation; 2-dehydro-3-deoxy-D-gluconate from pectin: step 1/5. Acts in the modification of cell walls via demethylesterification of cell wall pectin. This Arabidopsis thaliana (Mouse-ear cress) protein is Putative pectinesterase 11 (PME11).